An 828-amino-acid chain; its full sequence is Periplasmic nitrate reductase (828 aa).

The tat-type signal signal peptide spans 1-31 (MKLSRRSFMKANAVAAAAAAAGLSVPGVARA). Residues 39-95 (IKWDKAPCRFCGTGCGVLVGTQQGRVVACQGDPDAPVNRGLNCIKGYFLPKIMYGKD) enclose the 4Fe-4S Mo/W bis-MGD-type domain. [4Fe-4S] cluster contacts are provided by Cys46, Cys49, Cys53, and Cys81. Mo-bis(molybdopterin guanine dinucleotide)-binding positions include Lys83, Gln150, Asn175, Cys179, 212 to 219 (WGSNMAEM), 243 to 247 (STFQH), 262 to 264 (QSD), Met372, Gln376, Asn482, 508 to 509 (SD), Lys531, Asp558, and 718 to 727 (TGRVLEHWHT). Position 794 (Phe794) interacts with substrate. The Mo-bis(molybdopterin guanine dinucleotide) site is built by Asn802 and Lys819.

It belongs to the prokaryotic molybdopterin-containing oxidoreductase family. NasA/NapA/NarB subfamily. In terms of assembly, component of the periplasmic nitrate reductase NapAB complex composed of NapA and NapB. The cofactor is [4Fe-4S] cluster. Mo-bis(molybdopterin guanine dinucleotide) is required as a cofactor. Predicted to be exported by the Tat system. The position of the signal peptide cleavage has not been experimentally proven.

It localises to the periplasm. The catalysed reaction is 2 Fe(II)-[cytochrome] + nitrate + 2 H(+) = 2 Fe(III)-[cytochrome] + nitrite + H2O. Catalytic subunit of the periplasmic nitrate reductase complex NapAB. Receives electrons from NapB and catalyzes the reduction of nitrate to nitrite. The chain is Periplasmic nitrate reductase from Salmonella paratyphi A (strain ATCC 9150 / SARB42).